A 520-amino-acid polypeptide reads, in one-letter code: Nonsense-mediated mRNA decay factor SMG9 (520 aa).

Residues 1-143 (MSESGHSQPG…KGEKEGQRPT (143 aa)) are disordered. An N-acetylserine modification is found at Ser2. A phosphoserine mark is found at Ser2, Ser4, Ser7, Ser32, and Ser53. Residues 36–53 (GRERDYIAPWERERRDGS) show a composition bias toward basic and acidic residues. Pro residues predominate over residues 78-94 (QPPPPAAPAAPPAPAPL). Over residues 109–121 (GPAATTSTSTPEG) the composition is skewed to low complexity. Positions 122–133 (TAPPPPAAPVPP) are enriched in pro residues. At Ser451 the chain carries Phosphoserine.

This sequence belongs to the SMG9 family. As to quaternary structure, self-associates to form homodimers and forms heterodimers with SMG8; these assembly forms may represent SMG1C intermediate forms. Component of the SMG1C complex composed of SMG1, SMG8 and SMG9. Self-associates to form homodimers and forms heterodimers with SMG8; these assembly forms may represent SMG1C intermediate forms. Interacts with DHX34; the interaction is RNA-independent. Phosphorylated by SMG1.

Functionally, involved in nonsense-mediated decay (NMD) of mRNAs containing premature stop codons. Is recruited by release factors to stalled ribosomes together with SMG1 and SMG8 (forming the SMG1C protein kinase complex) and, in the SMG1C complex, is required for the efficient association between SMG1 and SMG8. Plays a role in brain, heart, and eye development. The polypeptide is Nonsense-mediated mRNA decay factor SMG9 (Bos taurus (Bovine)).